A 256-amino-acid polypeptide reads, in one-letter code: Kallikrein 1-related peptidase-like b4 (256 aa).

A signal peptide spans 1–17 (MWFLILFLALSLGGIDA). The segment at 18 to 24 (APPVQSQ) is activation peptide homolog. The 236-residue stretch at 18 to 253 (APPVQSQVDC…FSSWIRETMA (236 aa)) folds into the Peptidase S1 domain. Residues cysteine 45 and cysteine 61 are joined by a disulfide bond. Residues glutamate 77 and histidine 84 each contribute to the Zn(2+) site. Intrachain disulfides connect cysteine 147/cysteine 214, cysteine 179/cysteine 193, and cysteine 204/cysteine 229.

It belongs to the peptidase S1 family. Kallikrein subfamily. As to quaternary structure, 7S nerve growth factor is composed of two alpha chains, a beta dimer composed of identical chains, and two gamma chains. Requires Zn(2+) as cofactor. Post-translationally, the presence of Gln-24 prevents cleavage of the activation peptide, which remains attached at the amino end of the mature alpha chain.

In Mus musculus (Mouse), this protein is Kallikrein 1-related peptidase-like b4 (Klk1b4).